Consider the following 87-residue polypeptide: MNSLLMITACLVLFGTVWAKEGYLVNKSTGCKYGCFWLGKNENCDMECKAKNQGGSYGYCYSFACWCEGLPDSTPTYPLPNKSCSKK.

The N-terminal stretch at 1 to 19 (MNSLLMITACLVLFGTVWA) is a signal peptide. An LCN-type CS-alpha/beta domain is found at 20–85 (KEGYLVNKST…TYPLPNKSCS (66 aa)). Intrachain disulfides connect cysteine 31/cysteine 84, cysteine 35/cysteine 60, cysteine 44/cysteine 65, and cysteine 48/cysteine 67. Residues 86-87 (KK) constitute a propeptide, removed by a carboxypeptidase.

This sequence belongs to the long (4 C-C) scorpion toxin superfamily. Sodium channel inhibitor family. Beta subfamily. As to expression, expressed by the venom gland.

The protein localises to the secreted. Its function is as follows. Beta toxins bind voltage-independently at site-4 of sodium channels (Nav) and shift the voltage of activation toward more negative potentials thereby affecting sodium channel activation and promoting spontaneous and repetitive firing. The sequence is that of Toxin Cll5c from Centruroides limpidus (Mexican scorpion).